We begin with the raw amino-acid sequence, 149 residues long: Transcriptional repressor NrdR (149 aa).

The segment at 3 to 34 (CPFCSENDTKVIDSRLVADGHQVRRRRQCLAC) is a zinc-finger region. Residues 49–139 (PKVIKSNGNR…VYRSFEDIRE (91 aa)) enclose the ATP-cone domain.

This sequence belongs to the NrdR family. It depends on Zn(2+) as a cofactor.

In terms of biological role, negatively regulates transcription of bacterial ribonucleotide reductase nrd genes and operons by binding to NrdR-boxes. The polypeptide is Transcriptional repressor NrdR (Vibrio vulnificus (strain YJ016)).